Consider the following 441-residue polypeptide: Ribosomal protein uS12 methylthiotransferase RimO (441 aa).

An MTTase N-terminal domain is found at proline 7 to proline 117. 6 residues coordinate [4Fe-4S] cluster: cysteine 16, cysteine 52, cysteine 81, cysteine 148, cysteine 152, and cysteine 155. In terms of domain architecture, Radical SAM core spans leucine 134 to arginine 371. The TRAM domain maps to lysine 374–glycine 440.

It belongs to the methylthiotransferase family. RimO subfamily. [4Fe-4S] cluster serves as cofactor.

It localises to the cytoplasm. It carries out the reaction L-aspartate(89)-[ribosomal protein uS12]-hydrogen + (sulfur carrier)-SH + AH2 + 2 S-adenosyl-L-methionine = 3-methylsulfanyl-L-aspartate(89)-[ribosomal protein uS12]-hydrogen + (sulfur carrier)-H + 5'-deoxyadenosine + L-methionine + A + S-adenosyl-L-homocysteine + 2 H(+). Its function is as follows. Catalyzes the methylthiolation of an aspartic acid residue of ribosomal protein uS12. This chain is Ribosomal protein uS12 methylthiotransferase RimO, found in Rhodopseudomonas palustris (strain BisA53).